The primary structure comprises 444 residues: Homogentisate 1,2-dioxygenase (444 aa).

Residue His-298 is the Proton acceptor of the active site. Fe cation-binding residues include His-341 and Glu-347. Homogentisate-binding residues include Tyr-356 and His-377. Fe cation is bound at residue His-377.

Belongs to the homogentisate dioxygenase family. Hexamer; dimer of trimers. It depends on Fe cation as a cofactor.

It catalyses the reaction homogentisate + O2 = 4-maleylacetoacetate + H(+). The protein operates within amino-acid degradation; L-phenylalanine degradation; acetoacetate and fumarate from L-phenylalanine: step 4/6. Its function is as follows. Involved in the catabolism of homogentisate (2,5-dihydroxyphenylacetate or 2,5-OH-PhAc), a central intermediate in the degradation of phenylalanine and tyrosine. Catalyzes the oxidative ring cleavage of the aromatic ring of homogentisate to yield maleylacetoacetate. In Burkholderia ambifaria (strain MC40-6), this protein is Homogentisate 1,2-dioxygenase.